The primary structure comprises 907 residues: Protein translocase subunit SecA (907 aa).

ATP-binding positions include Gln87, 105–109, and Asp512; that span reads GEGKT. Residues 834 to 907 are disordered; that stretch reads QSDVDDMEQR…KYKQCHGKLS (74 aa). Over residues 840–856 the composition is skewed to basic and acidic residues; sequence MEQRRREEEAKIQRDYQ. The span at 865 to 876 shows a compositional bias: polar residues; that stretch reads DESQASSDNTPK. Positions 878–887 are enriched in basic and acidic residues; it reads MIREGDKVGR. 4 residues coordinate Zn(2+): Cys891, Cys893, Cys902, and His903. The span at 897–907 shows a compositional bias: basic residues; that stretch reads KKYKQCHGKLS.

This sequence belongs to the SecA family. As to quaternary structure, monomer and homodimer. Part of the essential Sec protein translocation apparatus which comprises SecA, SecYEG and auxiliary proteins SecDF-YajC and YidC. It depends on Zn(2+) as a cofactor.

Its subcellular location is the cell inner membrane. The protein localises to the cytoplasm. It catalyses the reaction ATP + H2O + cellular proteinSide 1 = ADP + phosphate + cellular proteinSide 2.. Its function is as follows. Part of the Sec protein translocase complex. Interacts with the SecYEG preprotein conducting channel. Has a central role in coupling the hydrolysis of ATP to the transfer of proteins into and across the cell membrane, serving both as a receptor for the preprotein-SecB complex and as an ATP-driven molecular motor driving the stepwise translocation of polypeptide chains across the membrane. In Shewanella denitrificans (strain OS217 / ATCC BAA-1090 / DSM 15013), this protein is Protein translocase subunit SecA.